Here is a 766-residue protein sequence, read N- to C-terminus: Pumilio domain-containing protein 12 (766 aa).

2 disordered regions span residues 63–98 (KKSS…KSKK) and 152–197 (AQEE…GDES). Polar residues predominate over residues 79 to 88 (SLCSESSFGS). A compositionally biased stretch (acidic residues) spans 179-193 (PADDENLESVDEQAG). The 358-residue stretch at 245–602 (ARAQKCKELW…LYAGITENLY (358 aa)) folds into the PUM-HD domain. Pumilio repeat units lie at residues 313–348 (ELTP…IIIN), 461–496 (SLKD…LIVK), 497–534 (NFKD…VIVS), and 535–571 (ELAN…REIT).

The polypeptide is Pumilio domain-containing protein 12 (puf-12) (Caenorhabditis elegans).